Consider the following 527-residue polypeptide: Bifunctional dihydrofolate reductase-thymidylate synthase (527 aa).

The region spanning 28-238 (PFSVVVASDE…KKYQFEKLVP (211 aa)) is the DHFR domain. Val32 is a substrate binding site. NADP(+) is bound by residues Ala34 and 40–46 (GIGDGGT). Asp54 is a substrate binding site. NADP(+) is bound by residues 84–86 (RKT) and 105–108 (LSRS). Ile160, Tyr166, and Thr184 together coordinate substrate. An NADP(+)-binding site is contributed by 161 to 168 (GGGTIYKQ). The interval 243–527 (EEQYLNLVGR…YPVISMEMAV (285 aa)) is thymidylate synthase. Arg263 lines the dUMP pocket. Residue Cys409 is part of the active site. DUMP is bound by residues His410, 428 to 432 (QRSCD), Asn440, and 470 to 472 (HVY).

It in the N-terminal section; belongs to the dihydrofolate reductase family. This sequence in the C-terminal section; belongs to the thymidylate synthase family. In terms of assembly, homodimer.

It catalyses the reaction dUMP + (6R)-5,10-methylene-5,6,7,8-tetrahydrofolate = 7,8-dihydrofolate + dTMP. The enzyme catalyses (6S)-5,6,7,8-tetrahydrofolate + NADP(+) = 7,8-dihydrofolate + NADPH + H(+). Its pathway is pyrimidine metabolism; dTTP biosynthesis. The protein operates within cofactor biosynthesis; tetrahydrofolate biosynthesis; 5,6,7,8-tetrahydrofolate from 7,8-dihydrofolate: step 1/1. Functionally, bifunctional enzyme. Involved in de novo dTMP biosynthesis. Key enzyme in folate metabolism. Catalyzes an essential reaction for de novo glycine and purine synthesis, DNA precursor synthesis, and for the conversion of dUMP to dTMP. This chain is Bifunctional dihydrofolate reductase-thymidylate synthase, found in Trypanosoma brucei brucei.